We begin with the raw amino-acid sequence, 444 residues long: Lycopaoctaene synthase (444 aa).

Positions 48 and 73 each coordinate NADP(+). Mg(2+)-binding residues include aspartate 76, glutamate 79, and aspartate 80. NADP(+)-binding residues include arginine 215, lysine 315, and arginine 317. 2 helical membrane passes run 391–411 (TAMVLAGALLIAALAYFAYVY) and 415–435 (GTSLKALPLFGVVIILAIGLF).

It belongs to the phytoene/squalene synthase family. Requires Mg(2+) as cofactor.

The protein resides in the membrane. It carries out the reaction 2 (2E,6E)-farnesyl diphosphate + NADH + H(+) = squalene + 2 diphosphate + NAD(+). The catalysed reaction is 2 (2E,6E)-farnesyl diphosphate + NADPH + H(+) = squalene + 2 diphosphate + NADP(+). The enzyme catalyses 2 (2E,6E,10E)-geranylgeranyl diphosphate + NADPH + H(+) = all-trans-lycopaoctaene + 2 diphosphate + NADP(+). In terms of biological role, converts the C20 geranylgeranyl diphosphate (GGPP) to the C40 lycopaoctaene, the first committed intermediate in the production of lycopadiene. Converts farnesyl diphosphate (FPP) into squalene, a precursor for sterol biosynthesis in eukaryotes. Converts with low efficiency the C20 phytyl diphosphate (PPP) to the C40 lycopadiene in vitro. This reaction may not have biological significance in vivo. The chain is Lycopaoctaene synthase from Botryococcus braunii (Green alga).